We begin with the raw amino-acid sequence, 115 residues long: Skin calcitonin gene-related peptide (115 aa).

An N-terminal signal peptide occupies residues Met1 to Ala25. A propeptide spans Ala26–Arg69 (removed in mature form by a carboxypeptidase). The cysteines at positions 71 and 76 are disulfide-linked. At Phe106 the chain carries Phenylalanine amide. Positions Gly107–Val115 are cleaved as a propeptide — removed in mature form by an endoprotease.

As to expression, skin, intestine and brain.

The protein localises to the secreted. CGRP induces vasodilation. It dilates a variety of vessels including the coronary, cerebral and systemic vasculature. Its abundance in the CNS also points toward a neurotransmitter or neuromodulator role. The polypeptide is Skin calcitonin gene-related peptide (Phyllomedusa bicolor (Two-colored leaf frog)).